Reading from the N-terminus, the 800-residue chain is Putative antiporter subunit mnhA2 (800 aa).

The next 20 helical transmembrane spans lie at 1–21 (MSLVYLLIAILVIMAMILLMS), 33–53 (IALVAPVISSIYFLIQIPSVA), 78–98 (GLSLMFSLIISLIGIAVFFYA), 118–138 (LFMFSMIGIVLSDNTILMYIF), 167–187 (FMITVFGGLALLVGFIMLYIM), 207–227 (GLFIPMIFMFLLGAFTKSAQF), 241–261 (TPVSAYLHSATMVKAGIFLLL), 273–293 (YVYIVTFVGLITMLFGSITAL), 300–320 (GILAYSTISQLGMIMAMVGIG), 331–351 (IASIYVFVLFGALFHLMNHAI), 387–407 (LVMTIAALSMAGVPFLNGFLS), 424–444 (FSLISMIAIVFVGVIASVFTF), 472–492 (PWLFSLPSLILMVLVPVIFFV), 527–547 (GFNIPLLLTIIIILLGSVLAI), 595–615 (IIMTLGIFMIIIGYGYIRIGL), 627–647 (GALEIILAIVTVTIGISLIFI), 651–671 (LTMVILNGVIGFVVTLFFIAM), 676–696 (LALTQLVVETITTILFIVSFS), 712–732 (IIKISVSLLMALIVVSLIFIT), and 768–788 (LDTLFEGLVLIITGLGIYTLL).

Belongs to the CPA3 antiporters (TC 2.A.63) subunit A family. In terms of assembly, may form a heterooligomeric complex that consists of seven subunits: mnhA2, mnhB2, mnhC2, mnhD2, mnhE2, mnhF2 and mnhG2.

The protein localises to the cell membrane. The polypeptide is Putative antiporter subunit mnhA2 (mnhA2) (Staphylococcus aureus (strain USA300)).